The primary structure comprises 85 residues: Small ribosomal subunit protein bS18 (85 aa).

This sequence belongs to the bacterial ribosomal protein bS18 family. In terms of assembly, part of the 30S ribosomal subunit. Forms a tight heterodimer with protein bS6.

Its function is as follows. Binds as a heterodimer with protein bS6 to the central domain of the 16S rRNA, where it helps stabilize the platform of the 30S subunit. The chain is Small ribosomal subunit protein bS18 from Solidesulfovibrio magneticus (strain ATCC 700980 / DSM 13731 / RS-1) (Desulfovibrio magneticus).